The chain runs to 861 residues: Probable beta-glucosidase A (861 aa).

The first 19 residues, 1–19, serve as a signal peptide directing secretion; sequence MKLGWIEVAALAAASVVSA. Asn-62, Asn-212, and Asn-253 each carry an N-linked (GlcNAc...) asparagine glycan. Asp-281 is a catalytic residue. N-linked (GlcNAc...) asparagine glycosylation is found at Asn-316, Asn-323, Asn-355, Asn-443, Asn-524, Asn-543, Asn-565, Asn-669, Asn-713, and Asn-846.

The protein belongs to the glycosyl hydrolase 3 family.

The protein resides in the secreted. The enzyme catalyses Hydrolysis of terminal, non-reducing beta-D-glucosyl residues with release of beta-D-glucose.. Its pathway is glycan metabolism; cellulose degradation. Beta-glucosidases are one of a number of cellulolytic enzymes involved in the degradation of cellulosic biomass. Catalyzes the last step releasing glucose from the inhibitory cellobiose. This chain is Probable beta-glucosidase A (bglA), found in Aspergillus flavus (strain ATCC 200026 / FGSC A1120 / IAM 13836 / NRRL 3357 / JCM 12722 / SRRC 167).